The primary structure comprises 491 residues: Cytochrome P450 2B9 (491 aa).

Residue S128 is modified to Phosphoserine; by PKA. C436 contacts heme.

The protein belongs to the cytochrome P450 family. Heme serves as cofactor.

It is found in the endoplasmic reticulum membrane. It localises to the microsome membrane. The catalysed reaction is an organic molecule + reduced [NADPH--hemoprotein reductase] + O2 = an alcohol + oxidized [NADPH--hemoprotein reductase] + H2O + H(+). In terms of biological role, cytochromes P450 are a group of heme-thiolate monooxygenases. In liver microsomes, this enzyme is involved in an NADPH-dependent electron transport pathway. It oxidizes a variety of structurally unrelated compounds, including steroids, fatty acids, and xenobiotics. The sequence is that of Cytochrome P450 2B9 (Cyp2b9) from Mus musculus (Mouse).